Here is a 162-residue protein sequence, read N- to C-terminus: SCF ubiquitin ligase complex protein SKP1b (162 aa).

Serine 2 carries the post-translational modification N-acetylserine. The segment at 100–162 is interaction with the F-box domain of F-box proteins; the sequence is ILAANYLDIK…NEWCEDKGGN (63 aa). Proline 143 carries the post-translational modification 4-hydroxyproline. The O-linked (GlcNAc...) hydroxyproline glycan is linked to proline 143.

This sequence belongs to the SKP1 family. As to quaternary structure, multiprotein complex (SCF) with cullin and F-box-containing protein. Capable of undergoing aggregation. Post-translationally, O-linked glycan consists of linear Gal-Gal-Fuc-Gal-GlcNAc. In terms of processing, not glycosylated in prespore cells. FpaA and fpaB seem to be identically glycosylated. Glycosylation is required for nuclear enrichment. Post-translationally, hydroxylated by phyA.

Its subcellular location is the cytoplasm. The protein resides in the nucleus. The polypeptide is SCF ubiquitin ligase complex protein SKP1b (fpaB-1) (Dictyostelium discoideum (Social amoeba)).